A 499-amino-acid polypeptide reads, in one-letter code: MKRSISIFITCLLIAVLTMGGLLPSPASAAGTKTPVAKNGQLSIKGTQLVNRDGKAVQLKGISSHGLQWYGDFVNKDSLKWLRDDWGITVFRAAMYTADGGYIDNPSVKNKVKEAVEAAKELGIYVIIDWHILNDGNPNQNKEKAKEFFKEMSSLYGNTPNVIYEIANEPNGDVNWKRDIKPYAEEVISVIRKNDPDNIIIVGTGTWSQDVNDAADDQLKDANVMYALHFYAGTHGQSLRDKANYALSKGAPIFVTEWGTSDASGNGGVFLDQSREWLNYLDSKNISWVNWNLSDKQESSSALKPGASKTGGWPLTDLTASGTFVRENIRGTKDSTKDVPETPAQDNPTQEKGVSVQYKAGDGRVNSNQIRPQLHIKNNGNATVDLKDVTARYWYNVKNKGQNFDCDYAQMGCGNLTHKFVTLHKPKQGADTYLELGFKTGTLSPGASTGNIQLRLHNDDWSNYAQSGDYSFFQSNTFKTTKKITLYHQGKLIWGTEPN.

The signal sequence occupies residues 1–29; that stretch reads MKRSISIFITCLLIAVLTMGGLLPSPASA. Residues His-65, 69–70, Tyr-96, and His-131 each bind substrate; that span reads WY. The active-site Proton donor is the Glu-169. Residue Tyr-231 participates in substrate binding. The Nucleophile role is filled by Glu-257. Residues 263–264, Trp-291, and 296–298 each bind substrate; these read AS and KQE. Positions 330 to 340 are enriched in basic and acidic residues; sequence RGTKDSTKDVP. The disordered stretch occupies residues 330–353; the sequence is RGTKDSTKDVPETPAQDNPTQEKG. Residues 350–499 enclose the CBM3 domain; it reads QEKGVSVQYK…GKLIWGTEPN (150 aa).

The protein belongs to the glycosyl hydrolase 5 (cellulase A) family.

It carries out the reaction Endohydrolysis of (1-&gt;4)-beta-D-glucosidic linkages in cellulose, lichenin and cereal beta-D-glucans.. The protein is Endoglucanase (bglC) of Bacillus subtilis.